Reading from the N-terminus, the 209-residue chain is uncharacterized protein (209 aa).

This is an uncharacterized protein from Acanthamoeba polyphaga mimivirus (APMV).